The chain runs to 447 residues: RNA-binding protein 208 (447 aa).

2 RRM domains span residues 73 to 147 (RSVY…WAYA) and 158 to 236 (FHIF…WATK). The span at 254 to 269 (TNGSSSNPGMEASQDT) shows a compositional bias: polar residues. Disordered stretches follow at residues 254 to 279 (TNGS…ENNP) and 353 to 372 (WGNK…PPLP). Positions 282–356 (TTVYVGNLGH…KPIKCSWGNK (75 aa)) constitute an RRM 3 domain.

Interacts with RBP-P.

Functionally, RNA-binding protein. The sequence is that of RNA-binding protein 208 from Oryza sativa subsp. japonica (Rice).